Here is a 506-residue protein sequence, read N- to C-terminus: uncharacterized protein (506 aa).

The protein to R.prowazekii RP789, RP027 and RP028.

This is an uncharacterized protein from Synechocystis sp. (strain ATCC 27184 / PCC 6803 / Kazusa).